Here is a 988-residue protein sequence, read N- to C-terminus: Voltage-gated delayed rectifier potassium channel KCNH5 (988 aa).

The Cytoplasmic portion of the chain corresponds to 1-217 (MPGGKRGLVA…LHYCAFKTTW (217 aa)). The region spanning 12–90 (QNTFLENIVR…VRQTFDNYES (79 aa)) is the PAS domain. Residues 91–143 (NCFEVLLYKKNRTPVWFYMQIAPIRNEHEKVVLFLCTFKDITLFKQPIEDDST) enclose the PAC domain. The chain crosses the membrane as a helical span at residues 218-238 (DWVILILTFYTAIMVPYNVSF). Residues 239-243 (KTKQN) are Extracellular-facing. Residues 244–264 (NIAWLVLDSVVDVIFLVDIVL) traverse the membrane as a helical segment. The Cytoplasmic segment spans residues 265–291 (NFHTTFVGPGGEVISDPKLIRMNYLKT). A helical transmembrane segment spans residues 292-312 (WFVIDLLSCLPYDIINAFENV). Over 313 to 319 (DEGISSL) the chain is Extracellular. A helical; Voltage-sensor transmembrane segment spans residues 320–340 (FSSLKVVRLLRLGRVARKLDH). The Cytoplasmic segment spans residues 341-346 (YLEYGA). The helical transmembrane segment at 347–367 (AVLVLLVCVFGLVAHWLACIW) threads the bilayer. Residues 368–419 (YSIGDYEVIDEVTNTIQIDSWLYQLALSIGTPYRYNTSAGIWEGGPSKDSLY) are Extracellular-facing. N-linked (GlcNAc...) asparagine glycosylation occurs at Asn-403. The segment at residues 420 to 440 (VSSLYFTMTSLTTIGFGNIAP) is an intramembrane region (pore-forming). The Selectivity filter signature appears at 432-437 (TIGFGN). Residues 441-446 (TTDVEK) lie on the Extracellular side of the membrane. The helical transmembrane segment at 447 to 467 (MFSVAMMMVGSLLYATIFGNV) threads the bilayer. The Cytoplasmic segment spans residues 468-988 (TTIFQQMYAN…PESDKDEIHF (521 aa)). 550–667 (AFRLASDGCL…NSFSRNLTLT (118 aa)) provides a ligand contact to a nucleoside 3',5'-cyclic phosphate. Residues 704 to 715 (HPVRKLFQKFKQ) are calmodulin-binding. The segment at 717 to 742 (KELRNQGSTQGDPERNQLQVESRSLQ) is disordered. Positions 721-742 (NQGSTQGDPERNQLQVESRSLQ) are enriched in polar residues. Lys-785 participates in a covalent cross-link: Glycyl lysine isopeptide (Lys-Gly) (interchain with G-Cter in ubiquitin). Positions 838-890 (GLLSEDPKSSDSENSVTKNPLRKTDSCDSGITKSDLRLDKAGEARSPLEHSPI) are disordered. The span at 871-885 (SDLRLDKAGEARSPL) shows a compositional bias: basic and acidic residues. Ser-883 bears the Phosphoserine mark. The segment at 909-948 (TLQEVKHELKEDIQLLSCRMTALEKQVAEILKILSEKSVP) is CAD (involved in subunit assembly). The tract at residues 969–988 (DIFSVSRPESPESDKDEIHF) is disordered. Positions 977-988 (ESPESDKDEIHF) are enriched in basic and acidic residues.

This sequence belongs to the potassium channel family. H (Eag) (TC 1.A.1.20) subfamily. Kv10.2/KCNH5 sub-subfamily. Homotetramer. The potassium channel is probably composed of a homo- or heterotetrameric complex of pore-forming alpha subunits that can associate with modulating beta subunits. Heteromultimer with KCNH1/EAG. As to expression, detected in brain, skeletal muscle, heart, placenta, lung and liver, and at low levels in kidney.

It localises to the membrane. The enzyme catalyses K(+)(in) = K(+)(out). Its function is as follows. Pore-forming (alpha) subunit of a voltage-gated delayed rectifier potassium channel that mediates outward-rectifying potassium currents which, on depolarization, reaches a steady-state level and do not inactivate. The kinetic is characterized by a slow activation time course and a small voltage dependence of the activation time constants, therefore, starts to open at more negative voltages. The activation kinetics depend on the prepulse potential and external divalent cation concentration. The time course of activation is biphasic with a fast and a slowly activating current component. With negative prepulses, the current activation is delayed and slowed down several fold, whereas more positive prepulses speed up activation, therefore the activation rate depends on holding potential. The sequence is that of Voltage-gated delayed rectifier potassium channel KCNH5 from Homo sapiens (Human).